Here is a 268-residue protein sequence, read N- to C-terminus: 3-deoxy-manno-octulosonate cytidylyltransferase (268 aa).

It belongs to the KdsB family.

Its subcellular location is the cytoplasm. It catalyses the reaction 3-deoxy-alpha-D-manno-oct-2-ulosonate + CTP = CMP-3-deoxy-beta-D-manno-octulosonate + diphosphate. It functions in the pathway nucleotide-sugar biosynthesis; CMP-3-deoxy-D-manno-octulosonate biosynthesis; CMP-3-deoxy-D-manno-octulosonate from 3-deoxy-D-manno-octulosonate and CTP: step 1/1. It participates in bacterial outer membrane biogenesis; lipopolysaccharide biosynthesis. Functionally, activates KDO (a required 8-carbon sugar) for incorporation into bacterial lipopolysaccharide in Gram-negative bacteria. The sequence is that of 3-deoxy-manno-octulosonate cytidylyltransferase from Ralstonia nicotianae (strain ATCC BAA-1114 / GMI1000) (Ralstonia solanacearum).